We begin with the raw amino-acid sequence, 86 residues long: Small ribosomal subunit protein bS20 (86 aa).

The protein belongs to the bacterial ribosomal protein bS20 family.

In terms of biological role, binds directly to 16S ribosomal RNA. The protein is Small ribosomal subunit protein bS20 of Kineococcus radiotolerans (strain ATCC BAA-149 / DSM 14245 / SRS30216).